The following is a 249-amino-acid chain: Coproheme decarboxylase (249 aa).

Tyr145 is a catalytic residue. Fe-coproporphyrin III contacts are provided by residues 145–149 (YPMAR) and His172.

It belongs to the ChdC family. Type 1 subfamily. Requires Fe-coproporphyrin III as cofactor.

It catalyses the reaction Fe-coproporphyrin III + 2 H2O2 + 2 H(+) = heme b + 2 CO2 + 4 H2O. The catalysed reaction is Fe-coproporphyrin III + H2O2 + H(+) = harderoheme III + CO2 + 2 H2O. The enzyme catalyses harderoheme III + H2O2 + H(+) = heme b + CO2 + 2 H2O. The protein operates within porphyrin-containing compound metabolism; protoheme biosynthesis. Functionally, involved in coproporphyrin-dependent heme b biosynthesis. Catalyzes the decarboxylation of Fe-coproporphyrin III (coproheme) to heme b (protoheme IX), the last step of the pathway. The reaction occurs in a stepwise manner with a three-propionate intermediate. The polypeptide is Coproheme decarboxylase (Oceanobacillus iheyensis (strain DSM 14371 / CIP 107618 / JCM 11309 / KCTC 3954 / HTE831)).